We begin with the raw amino-acid sequence, 299 residues long: uncharacterized protein (299 aa).

The next 8 helical transmembrane spans lie at Ile-13 to Met-33, Ala-36 to Leu-56, Ser-79 to Ile-99, Thr-112 to Ile-132, Ile-151 to Ile-171, Phe-201 to Val-221, Tyr-241 to Ser-261, and Pro-267 to Ile-287.

This sequence belongs to the ABC-3 integral membrane protein family.

It localises to the plastid. Its subcellular location is the cyanelle membrane. This is an uncharacterized protein from Cyanophora paradoxa.